The following is a 776-amino-acid chain: Outer capsid protein VP4 (776 aa).

Positions 65–224 (LDGPYQPTNF…TCTEYINNGL (160 aa)) are spike head. Residues Cys-203 and Cys-216 are joined by a disulfide bond. Positions 248–479 (AQVNEDIVIS…LISLVPSNDD (232 aa)) are spike body and stalk (antigen domain). The short motif at 308 to 310 (DGE) is the DGE motif; interaction with ITGA2/ITGB1 heterodimer element. Cys-318 and Cys-380 form a disulfide bridge. Positions 389-409 (LPVGQWPVMTGGAVMLHAAGV) are hydrophobic; possible role in virus entry into host cell. The short motif at 448–450 (YGL) is the YGL motif; interaction with ITGA4 element. The stretch at 484 to 511 (IMNSVTVRQDLERQLGELREEFNALSQE) forms a coiled coil. The spike foot stretch occupies residues 510–776 (QEIAISQLID…IEQLILQCRL (267 aa)). Residues 644-646 (KID) carry the KID motif; interaction with HSPA8 motif.

Belongs to the rotavirus VP4 family. In terms of assembly, homotrimer. VP4 adopts a dimeric appearance above the capsid surface, while forming a trimeric base anchored inside the capsid layer. Only hints of the third molecule are observed above the capsid surface. It probably performs a series of molecular rearrangements during viral entry. Prior to trypsin cleavage, it is flexible. The priming trypsin cleavage triggers its rearrangement into rigid spikes with approximate two-fold symmetry of their protruding parts. After an unknown second triggering event, cleaved VP4 may undergo another rearrangement, in which two VP5* subunits fold back on themselves and join a third subunit to form a tightly associated trimer, shaped like a folded umbrella. Interacts with VP6. Interacts with VP7. As to quaternary structure, homotrimer. The trimer is coiled-coil stabilized by its C-terminus, however, its N-terminus, known as antigen domain or 'body', seems to be flexible allowing it to self-associate either as a dimer or a trimer. In terms of processing, proteolytic cleavage by trypsin results in activation of VP4 functions and greatly increases infectivity. The penetration into the host cell is dependent on trypsin treatment of VP4. It produces two peptides, VP5* and VP8* that remain associated with the virion. Cleavage of VP4 by trypsin probably occurs in vivo in the lumen of the intestine prior to infection of enterocytes. Trypsin seems to be incorporated into the three-layered viral particles but remains inactive as long as the viral outer capsid is intact and would only be activated upon the solubilization of the latter.

It is found in the virion. The protein localises to the host rough endoplasmic reticulum. It localises to the host cell membrane. Its subcellular location is the host cytoplasm. The protein resides in the host cytoskeleton. It is found in the host endoplasmic reticulum-Golgi intermediate compartment. In terms of biological role, spike-forming protein that mediates virion attachment to the host epithelial cell receptors and plays a major role in cell penetration, determination of host range restriction and virulence. Rotavirus attachment and entry into the host cell probably involves multiple sequential contacts between the outer capsid proteins VP4 and VP7, and the cell receptors. It is subsequently lost, together with VP7, following virus entry into the host cell. Following entry into the host cell, low intracellular or intravesicular Ca(2+) concentration probably causes the calcium-stabilized VP7 trimers to dissociate from the virion. This step is probably necessary for the membrane-disrupting entry step and the release of VP4, which is locked onto the virion by VP7. During the virus exit from the host cell, VP4 seems to be required to target the newly formed virions to the host cell lipid rafts. Its function is as follows. Forms the spike 'foot' and 'body' and acts as a membrane permeabilization protein that mediates release of viral particles from endosomal compartments into the cytoplasm. During entry, the part of VP5* that protrudes from the virus folds back on itself and reorganizes from a local dimer to a trimer. This reorganization may be linked to membrane penetration by exposing VP5* hydrophobic region. In integrin-dependent strains, VP5* targets the integrin heterodimer ITGA2/ITGB1 for cell attachment. Forms the head of the spikes and mediates the recognition of specific host cell surface glycans. It is the viral hemagglutinin and an important target of neutralizing antibodies. In sialic acid-dependent strains, VP8* binds to host cell sialic acid, most probably a ganglioside, providing the initial contact. In some other strains, VP8* mediates the attachment to histo-blood group antigens (HBGAs) for viral entry. The polypeptide is Outer capsid protein VP4 (Rotavirus A (strain RVA/Equine/United States/FI-14/1980/G3P4[12]) (RV-A)).